The primary structure comprises 388 residues: 3-dehydroquinate synthase (388 aa).

NAD(+)-binding positions include 85–90 (DGEQYK), 119–123 (GVIGD), 143–144 (TT), lysine 156, lysine 165, and 183–186 (TLKT). Zn(2+) is bound by residues glutamate 198, histidine 261, and histidine 278.

It belongs to the sugar phosphate cyclases superfamily. Dehydroquinate synthase family. Requires Co(2+) as cofactor. It depends on Zn(2+) as a cofactor. NAD(+) is required as a cofactor.

It localises to the cytoplasm. The catalysed reaction is 7-phospho-2-dehydro-3-deoxy-D-arabino-heptonate = 3-dehydroquinate + phosphate. It participates in metabolic intermediate biosynthesis; chorismate biosynthesis; chorismate from D-erythrose 4-phosphate and phosphoenolpyruvate: step 2/7. In terms of biological role, catalyzes the conversion of 3-deoxy-D-arabino-heptulosonate 7-phosphate (DAHP) to dehydroquinate (DHQ). In Psychrobacter arcticus (strain DSM 17307 / VKM B-2377 / 273-4), this protein is 3-dehydroquinate synthase.